The primary structure comprises 227 residues: Acyl-protein thioesterase 1 (227 aa).

Residues serine 119, aspartate 173, and histidine 207 each act as charge relay system in the active site.

Belongs to the AB hydrolase superfamily. AB hydrolase 2 family.

Its subcellular location is the cytoplasm. The protein resides in the nucleus. The catalysed reaction is S-hexadecanoyl-L-cysteinyl-[protein] + H2O = L-cysteinyl-[protein] + hexadecanoate + H(+). Its function is as follows. Hydrolyzes fatty acids from S-acylated cysteine residues in proteins with a strong preference for palmitoylated G-alpha proteins over other acyl substrates. Mediates the deacylation of G-alpha proteins such as GPA1 in vivo, but has weak or no activity toward palmitoylated Ras proteins. Has weak lysophospholipase activity in vitro; however such activity may not exist in vivo. This is Acyl-protein thioesterase 1 from Saccharomyces cerevisiae (strain ATCC 204508 / S288c) (Baker's yeast).